A 234-amino-acid chain; its full sequence is Sugar fermentation stimulation protein homolog (234 aa).

The protein belongs to the SfsA family.

The sequence is that of Sugar fermentation stimulation protein homolog from Shewanella baltica (strain OS195).